Consider the following 503-residue polypeptide: Splicing factor 3A subunit 3 (503 aa).

Disordered stretches follow at residues 296 to 317 and 341 to 384; these read PALM…EHER and ATKE…NPKN. The segment covering 358–377 has biased composition (acidic residues); the sequence is DDSDVEASESDNEDDPDADD. Phosphoserine is present on residues serine 360, serine 365, and serine 367. Residues 408 to 439 form a Matrin-type zinc finger; sequence YNCEICGNFTYKGPKAFQRHFAEWRHAHGMRC.

The protein belongs to the SF3A3 family. Probable component of a the U2 small nuclear ribonucleoproteins complex (U2 snRNP). In terms of tissue distribution, ubiquitous. In ovaries and testes, it is expressed in all germ and somatic cells. Highly expressed in spermatogonias and spermatocytes. Highly expressed in the germ cells of larval testes, while it is weakly expressed in fat body cells, in polyploid nuclei of salivary glands, and in larval brain.

Its subcellular location is the nucleus. Probable subunit of a splicing factor complex required for 'A' complex assembly formed by the stable binding of U2 snRNP to the branchpoint sequence (BPS) in pre-mRNA. Involved in male fertility. This Drosophila melanogaster (Fruit fly) protein is Splicing factor 3A subunit 3 (noi).